The chain runs to 218 residues: 23 kDa integral membrane protein (218 aa).

Residues 1–12 (MATLGTGMRCLK) lie on the Cytoplasmic side of the membrane. Residues 13–36 (SCVFVLNIICLLCSLVLIGAGAYV) form a helical membrane-spanning segment. The Extracellular portion of the chain corresponds to 37 to 55 (EVKFSQYGDNLHKVWQAAP). The helical transmembrane segment at 56-71 (IAIIVVGVIILIVSFL) threads the bilayer. The Cytoplasmic portion of the chain corresponds to 72–82 (GCCGAIKENVC). Residues 83–108 (MLYMYAFFLVVLLIAELAAAIVAVVY) traverse the membrane as a helical segment. The Extracellular segment spans residues 109–183 (KDRIDSEIDA…SVFGAFLKRN (75 aa)). The N-linked (GlcNAc...) asparagine glycan is linked to N165. The chain crosses the membrane as a helical span at residues 184 to 205 (LVIVACVAFGVCFFQLLSIVIA). The Cytoplasmic segment spans residues 206 to 218 (CCLGRQIKEYENV).

The protein belongs to the tetraspanin (TM4SF) family.

It is found in the membrane. The chain is 23 kDa integral membrane protein from Schistosoma mansoni (Blood fluke).